A 667-amino-acid chain; its full sequence is UvrABC system protein C (667 aa).

Residues 43–122 form the GIY-YIG domain; the sequence is AEPGCYLMRD…IKNQQPHFNV (80 aa). The UVR domain maps to 232 to 267; sequence QELKVLLEKQMERYSDRMDYESAANIRDQIKGLEQL.

The protein belongs to the UvrC family. As to quaternary structure, interacts with UvrB in an incision complex.

It is found in the cytoplasm. Functionally, the UvrABC repair system catalyzes the recognition and processing of DNA lesions. UvrC both incises the 5' and 3' sides of the lesion. The N-terminal half is responsible for the 3' incision and the C-terminal half is responsible for the 5' incision. This is UvrABC system protein C from Prochlorococcus marinus (strain MIT 9313).